The sequence spans 129 residues: MSTTSEIIEKLKTLTLLEAAELVSQIEETFGVDASAPVGGGMVMAVGDAGGAAEEVAEKTTFDVVVEDIPSDKRVAVLKVIRKLTSLGLAEVKAFTNSLPGTLQEGISKEEAETAKTELEAAGAVVKIA.

Belongs to the bacterial ribosomal protein bL12 family. As to quaternary structure, homodimer. Part of the ribosomal stalk of the 50S ribosomal subunit. Forms a multimeric L10(L12)X complex, where L10 forms an elongated spine to which 2 to 4 L12 dimers bind in a sequential fashion. Binds GTP-bound translation factors.

The protein resides in the plastid. The protein localises to the chloroplast. Its function is as follows. Forms part of the ribosomal stalk which helps the ribosome interact with GTP-bound translation factors. Is thus essential for accurate translation. The polypeptide is Large ribosomal subunit protein bL12c (Oltmannsiellopsis viridis (Marine flagellate)).